Consider the following 583-residue polypeptide: Potassium-transporting ATPase potassium-binding subunit (583 aa).

The next 10 membrane-spanning stretches (helical) occupy residues 3-23, 66-86, 135-155, 177-197, 266-286, 293-313, 402-422, 440-460, 506-526, and 549-569; these read NIIW…WPLG, MACV…LLMA, GLTV…FALI, VLYI…EQGV, LEML…GAKI, VAIF…TVQA, GLYG…LMVG, AVVV…LMCL, VLLG…ILAM, and LFIF…FFPA.

Belongs to the KdpA family. The system is composed of three essential subunits: KdpA, KdpB and KdpC.

The protein localises to the cell inner membrane. In terms of biological role, part of the high-affinity ATP-driven potassium transport (or Kdp) system, which catalyzes the hydrolysis of ATP coupled with the electrogenic transport of potassium into the cytoplasm. This subunit binds the periplasmic potassium ions and delivers the ions to the membrane domain of KdpB through an intramembrane tunnel. This chain is Potassium-transporting ATPase potassium-binding subunit, found in Desulfovibrio desulfuricans (strain ATCC 27774 / DSM 6949 / MB).